The sequence spans 538 residues: Zinc finger protein 155 (538 aa).

The region spanning 8-78 (VTFKDVAVVF…GTATQREGNS (71 aa)) is the KRAB domain. C2H2-type zinc fingers lie at residues 176–198 (YTCDECGKSICYISALHVHQRVH), 204–226 (FMCDVCGKEFSQSSHLQTHQRVH), 232–254 (FKCEQCGKGFSRRSALNVHRKLH), 260–282 (YICEACGKAFIHDSQLKEHKRIH), 288–310 (FKCDICGKTFYFRSRLKSHSMVH), 316–338 (FRCDTCDKSFHQRSALNRHCMVH), 344–366 (YRCEQCGKGFIGRLDFYKHQVVH), 372–394 (YNCKECGKSFRWSSCLLNHQRVH), 400–422 (FKCEECGKGFYTNSQLSSHQRSH), 428–450 (YKCEECGKGYVTKFNLDLHQRVH), and 456–478 (YNCKECGKNFSRASSILNHKRLH). The segment at 484–506 (FKCEDCGKRLVHRTYRKDQPRDY) adopts a C2H2-type 12; degenerate zinc-finger fold.

This sequence belongs to the krueppel C2H2-type zinc-finger protein family.

The protein resides in the nucleus. Its function is as follows. May be involved in transcriptional regulation. This Homo sapiens (Human) protein is Zinc finger protein 155 (ZNF155).